The chain runs to 324 residues: MIYQIIHSVLSTVGVSLNAFMMYLALTKSPKIMRPCSAIITIKTGTDILASIMSFFVMQRVITDGSSIIVIPTGPCTNFGKTACYVGHMLMLCFLEYNLIWMISSYIFRYYILYVRDPPIKHLVFVAFCLSIPSMVHMAAWFSFYDSNETTEDLSSYGIGSGEMALGGEVVYWSAITLITQLFITAFLVVVAYIWIRETLCSFAVKMGSVKKDVKNLNKRLVKVINFQVFLPSFIFLGVITFASMFTSKISYEYAQYAISVIFMFSPICSPFSYILFVPHYRNVIIGKKKQPKPHPEMCGPIRSNTRTTSISVTNNSSHLSSAH.

7 helical membrane passes run 5 to 25 (IIHS…MYLA), 38 to 58 (AIIT…FFVM), 83 to 103 (ACYV…IWMI), 124 to 144 (VFVA…WFSF), 176 to 196 (ITLI…YIWI), 227 to 247 (FQVF…SMFT), and 258 to 278 (AISV…ILFV). The disordered stretch occupies residues 290 to 324 (KQPKPHPEMCGPIRSNTRTTSISVTNNSSHLSSAH). The span at 303–324 (RSNTRTTSISVTNNSSHLSSAH) shows a compositional bias: polar residues.

This sequence belongs to the nematode receptor-like protein srd family.

The protein resides in the membrane. In Caenorhabditis elegans, this protein is Serpentine receptor class delta-30 (srd-30).